Here is a 423-residue protein sequence, read N- to C-terminus: 58 kDa phosphoprotein (423 aa).

Residues 46–60 show a composition bias toward basic and acidic residues; it reads KMGYEKMKSEDSTEE. A disordered region spans residues 46 to 82; the sequence is KMGYEKMKSEDSTEEKSDEEEEDEEEEEEEEEDDDPE. Residues 61–82 show a composition bias toward acidic residues; the sequence is KSDEEEEDEEEEEEEEEDDDPE. TPR repeat units lie at residues 113-146, 147-180, and 181-214; these read ICKL…GNPS, AMIY…NVDS, and ANAY…DYDE. The tract at residues 260–301 is disordered; that stretch reads KKKAEKMYKENNKRENYDSDSSDSSYSEPDFSGDFPGGMPGG. Over residues 264–276 the composition is skewed to basic and acidic residues; the sequence is EKMYKENNKRENY. Residues 292–362 are 19 X 3-4 AA approximate repeats; sequence GDFPGGMPGG…GMPGMPGGMP (71 aa). The 63-residue stretch at 361–423 folds into the STI1 domain; that stretch reads MPDLNSPEMK…GGMMGEKPKP (63 aa).

The protein localises to the cytoplasm. Functionally, may play a role in protein folding or protein-protein interactions. May act as a co-chaperone. This chain is 58 kDa phosphoprotein, found in Plasmodium berghei.